The sequence spans 31 residues: Ranatuerin-2Ca (31 aa).

A disulfide bridge links Cys24 with Cys29.

In terms of tissue distribution, expressed by the skin glands.

The protein localises to the secreted. Its function is as follows. Antibacterial activity against Gram-positive bacterium S.aureus and Gram-negative bacterium E.coli. Has activity against C.albicans. This Lithobates clamitans (Green frog) protein is Ranatuerin-2Ca.